We begin with the raw amino-acid sequence, 462 residues long: ATP synthase subunit beta (462 aa).

Position 151–158 (151–158 (GGAGVGKT)) interacts with ATP.

Belongs to the ATPase alpha/beta chains family. In terms of assembly, F-type ATPases have 2 components, CF(1) - the catalytic core - and CF(0) - the membrane proton channel. CF(1) has five subunits: alpha(3), beta(3), gamma(1), delta(1), epsilon(1). CF(0) has four main subunits: a(1), b(1), b'(1) and c(9-12).

It is found in the cell inner membrane. It carries out the reaction ATP + H2O + 4 H(+)(in) = ADP + phosphate + 5 H(+)(out). Functionally, produces ATP from ADP in the presence of a proton gradient across the membrane. The catalytic sites are hosted primarily by the beta subunits. The chain is ATP synthase subunit beta from Chlorobium limicola (strain DSM 245 / NBRC 103803 / 6330).